The following is a 279-amino-acid chain: Probable nicotinate-nucleotide pyrophosphorylase [carboxylating] (279 aa).

Residues Arg90, 125–127 (TRK), Arg149, Lys159, Glu189, Asp210, 238–240 (SGG), and 259–261 (MGF) each bind substrate.

It belongs to the NadC/ModD family. As to quaternary structure, hexamer formed by 3 homodimers.

It catalyses the reaction nicotinate beta-D-ribonucleotide + CO2 + diphosphate = quinolinate + 5-phospho-alpha-D-ribose 1-diphosphate + 2 H(+). It functions in the pathway cofactor biosynthesis; NAD(+) biosynthesis; nicotinate D-ribonucleotide from quinolinate: step 1/1. Involved in the catabolism of quinolinic acid (QA). The polypeptide is Probable nicotinate-nucleotide pyrophosphorylase [carboxylating] (nadC) (Methanothermobacter thermautotrophicus (strain ATCC 29096 / DSM 1053 / JCM 10044 / NBRC 100330 / Delta H) (Methanobacterium thermoautotrophicum)).